A 171-amino-acid chain; its full sequence is Large ribosomal subunit protein bL9 (171 aa).

It belongs to the bacterial ribosomal protein bL9 family.

Its function is as follows. Binds to the 23S rRNA. This is Large ribosomal subunit protein bL9 from Rickettsia akari (strain Hartford).